A 1755-amino-acid chain; its full sequence is Transposon Ty1-GR1 Gag-Pol polyprotein (1755 aa).

A compositionally biased stretch (low complexity) spans 1 to 16 (MESQQLSQHSHISHGS). Disordered stretches follow at residues 1–93 (MESQ…MMTQ), 126–173 (PQSQ…RPPP), and 352–421 (GSRN…SKST). Polar residues-rich tracts occupy residues 48–60 (TKAN…TPAS), 71–93 (SPQT…MMTQ), and 127–152 (QSQF…GNTF). Over residues 153–165 (TDSSSADSDMTST) the composition is skewed to low complexity. The RNA-binding stretch occupies residues 299 to 401 (NNGIHINNKV…NSKSKTARAH (103 aa)). Residues 402–418 (NVSTSNNSPSTDNDSIS) show a composition bias toward low complexity. Serine 416 is modified (phosphoserine). Aspartate 461 functions as the For protease activity; shared with dimeric partner in the catalytic mechanism. The tract at residues 583-640 (NVHTSESTRKYPYPFIHRMLAHANAQTIRYSLKNNTITYFNESDVDWSSAIDYQCPDC) is integrase-type zinc finger-like. The Integrase catalytic domain maps to 660–835 (NSYEPFQYLH…AGLDISTLLP (176 aa)). Positions 671 and 736 each coordinate Mg(2+). Disordered regions lie at residues 956–1087 (SKAV…ETEK), 1092–1111 (RSPS…NIVP), and 1130–1187 (DLPL…DNET). A compositionally biased stretch (low complexity) spans 960–969 (SPTDSTPPST). Positions 1005 to 1015 (STPQISNIEST) are enriched in polar residues. Residues 1038–1053 (ESSHASKSKDFRHSDS) show a composition bias toward basic and acidic residues. 2 stretches are compositionally biased toward polar residues: residues 1054–1082 (YSEN…QISD) and 1101–1111 (PENNSSHNIVP). Positions 1178–1212 (KKRSLEDNETEIKVSRDTWNTKNMRSLEPPRSKKR) match the Bipartite nuclear localization signal motif. Residues 1338–1476 (NNYYITQLDI…DILGLEIKYQ (139 aa)) enclose the Reverse transcriptase Ty1/copia-type domain. The Mg(2+) site is built by aspartate 1346, aspartate 1427, aspartate 1428, aspartate 1610, glutamate 1652, and aspartate 1685. In terms of domain architecture, RNase H Ty1/copia-type spans 1610 to 1752 (DASYGNQPYY…IKTFKLLTNK (143 aa)).

In terms of assembly, the capsid protein forms a homotrimer, from which the VLPs are assembled. The protease is a homodimer, whose active site consists of two apposed aspartic acid residues. Post-translationally, initially, virus-like particles (VLPs) are composed of the structural unprocessed proteins Gag and Gag-Pol, and also contain the host initiator methionine tRNA (tRNA(i)-Met) which serves as a primer for minus-strand DNA synthesis, and a dimer of genomic Ty RNA. Processing of the polyproteins occurs within the particle and proceeds by an ordered pathway, called maturation. First, the protease (PR) is released by autocatalytic cleavage of the Gag-Pol polyprotein yielding capsid protein p45 and a Pol-p154 precursor protein. This cleavage is a prerequisite for subsequent processing of Pol-p154 at the remaining sites to release the mature structural and catalytic proteins. Maturation takes place prior to the RT reaction and is required to produce transposition-competent VLPs.

Its subcellular location is the cytoplasm. The protein resides in the nucleus. The enzyme catalyses DNA(n) + a 2'-deoxyribonucleoside 5'-triphosphate = DNA(n+1) + diphosphate. It catalyses the reaction Endonucleolytic cleavage to 5'-phosphomonoester.. Capsid protein (CA) is the structural component of the virus-like particle (VLP), forming the shell that encapsulates the retrotransposons dimeric RNA genome. The particles are assembled from trimer-clustered units and there are holes in the capsid shells that allow for the diffusion of macromolecules. CA also has nucleocapsid-like chaperone activity, promoting primer tRNA(i)-Met annealing to the multipartite primer-binding site (PBS), dimerization of Ty1 RNA and initiation of reverse transcription. In terms of biological role, the aspartyl protease (PR) mediates the proteolytic cleavages of the Gag and Gag-Pol polyproteins after assembly of the VLP. Functionally, reverse transcriptase/ribonuclease H (RT) is a multifunctional enzyme that catalyzes the conversion of the retro-elements RNA genome into dsDNA within the VLP. The enzyme displays a DNA polymerase activity that can copy either DNA or RNA templates, and a ribonuclease H (RNase H) activity that cleaves the RNA strand of RNA-DNA heteroduplexes during plus-strand synthesis and hydrolyzes RNA primers. The conversion leads to a linear dsDNA copy of the retrotransposon that includes long terminal repeats (LTRs) at both ends. Its function is as follows. Integrase (IN) targets the VLP to the nucleus, where a subparticle preintegration complex (PIC) containing at least integrase and the newly synthesized dsDNA copy of the retrotransposon must transit the nuclear membrane. Once in the nucleus, integrase performs the integration of the dsDNA into the host genome. The sequence is that of Transposon Ty1-GR1 Gag-Pol polyprotein (TY1B-GR1) from Saccharomyces cerevisiae (strain ATCC 204508 / S288c) (Baker's yeast).